Consider the following 723-residue polypeptide: MGVKKPWIQLQKRLNWWVREQDWNQHVDQLHMLQQKSIWESPLLRAAKENDMCTLKRLQHDQNCDFRQRGALGETALHVAALYDNLDAAIMLMETAPYLVTESTLCEPFVGQTALHIAIMNQNVNLVRALLARGASASARATGSAFHRSSHNLIYYGEHPLSFAACVGSEEIVRLLIEHGADIRAQDSLGNTVLHILVLQPNKTFACQMYNLLLSHDGGDHLKSLELVPNNQGLTPFKLAGVEGNTVMFQHLMQKRKHIQWSLGPLTSSIYDLTEIDSWGEDLSFLELVVSSKKKEARQILEQTPVKELVSLKWKKYGQPYFCLLGMLYIFYMICFTTCCVYRPLKFRDANRTHVRDNTVLEQKPLQEAYVTYQDKVRLVGELVTVIGAVVILLIEIPDIFRVGASRYFGHTVLGGPFHVIIITYASLVLLIMVMRLTSMNGEVVPISMALVLGWCSVMYFSRGFQMLGPFTIMIQKMIFGDLLRFCWLMAMVILGFASAFYIIFQTEDPESLGEFSDYPTAMFSTFELFLTIIDGPANYSVDLPFMYHLTYFAFAIIATLLMLNLFIAMMGDTHWRVAQERDELWRAQVVATTVMLERKMPRFLWPRSGICGCEYGLGDRWFLRVEHHQEQNPYRVLRYVEAFKSSDKEEVQEQLSEKQPSGTETGTLARGSVVLQTPPLSRTTSLSSNSHRGWEILRRNTLGHLNLGQDLGEGDGEEIYHF.

The Cytoplasmic segment spans residues 1–320; it reads MGVKKPWIQL…SLKWKKYGQP (320 aa). ANK repeat units lie at residues 72-101, 110-139, 156-185, 189-222, and 232-261; these read LGETALHVAALYDNLDAAIMLMETAPYLVT, VGQTALHIAIMNQNVNLVRALLARGASASA, YGEHPLSFAACVGSEEIVRLLIEHGADIRA, LGNTVLHILVLQPNKTFACQMYNLLLSHDGGDHL, and QGLTPFKLAGVEGNTVMFQHLMQKRKHIQW. The helical transmembrane segment at 321–341 threads the bilayer; it reads YFCLLGMLYIFYMICFTTCCV. Residues 342–378 are Extracellular-facing; the sequence is YRPLKFRDANRTHVRDNTVLEQKPLQEAYVTYQDKVR. An N-linked (GlcNAc...) asparagine glycan is attached at Asn351. The helical transmembrane segment at 379 to 401 threads the bilayer; it reads LVGELVTVIGAVVILLIEIPDIF. The Cytoplasmic portion of the chain corresponds to 402–412; the sequence is RVGASRYFGHT. A helical membrane pass occupies residues 413 to 435; sequence VLGGPFHVIIITYASLVLLIMVM. The Extracellular segment spans residues 436-441; that stretch reads RLTSMN. A helical transmembrane segment spans residues 442–462; that stretch reads GEVVPISMALVLGWCSVMYFS. Topologically, residues 463–485 are cytoplasmic; that stretch reads RGFQMLGPFTIMIQKMIFGDLLR. The chain crosses the membrane as a helical span at residues 486–506; that stretch reads FCWLMAMVILGFASAFYIIFQ. Residues 517-537 constitute an intramembrane region (pore-forming); sequence SDYPTAMFSTFELFLTIIDGP. A Ca(2+)-binding site is contributed by Asp535. The helical transmembrane segment at 550–570 threads the bilayer; the sequence is LTYFAFAIIATLLMLNLFIAM. The Cytoplasmic portion of the chain corresponds to 571–723; the sequence is MGDTHWRVAQ…EGDGEEIYHF (153 aa). The tract at residues 591–595 is interaction with S100A10; that stretch reads VATTV. Residues 643–646 form an involved in Ca(2+)-dependent inactivation region; that stretch reads AFKS. Positions 651-674 are disordered; that stretch reads EVQEQLSEKQPSGTETGTLARGSV. Positions 654–667 are enriched in polar residues; the sequence is EQLSEKQPSGTETG. Thr678 carries the phosphothreonine modification. Position 682 is a phosphoserine (Ser682). Positions 693-723 are involved in Ca(2+)-dependent inactivation; it reads RGWEILRRNTLGHLNLGQDLGEGDGEEIYHF.

Belongs to the transient receptor (TC 1.A.4) family. TrpV subfamily. TRPV5 sub-subfamily. As to quaternary structure, homotetramer and probably heterotetramer with TRPV6. Interacts with TRPV6. Interacts with S100A10 and probably with the ANAX2-S100A10 heterotetramer. The interaction with S100A10 is required for the trafficking to the plasma membrane. Interacts with calmodulin. Interacts with BSPRY, which results in its inactivation. In terms of processing, glycosylated. As to expression, detected in kidney (at protein level). Detected in kidney.

It is found in the cell membrane. The protein resides in the apical cell membrane. The enzyme catalyses Ca(2+)(in) = Ca(2+)(out). With respect to regulation, activated by WNK3. In terms of biological role, constitutively active calcium selective cation channel thought to be involved in Ca(2+) reabsorption in kidney and intestine. Required for normal Ca(2+) reabsorption in the kidney distal convoluted tubules. The channel is activated by low internal calcium level and the current exhibits an inward rectification. A Ca(2+)-dependent feedback regulation includes fast channel inactivation and slow current decay. Heteromeric assembly with TRPV6 seems to modify channel properties. TRPV5-TRPV6 heteromultimeric concatemers exhibit voltage-dependent gating. The sequence is that of Transient receptor potential cation channel subfamily V member 5 (Trpv5) from Rattus norvegicus (Rat).